We begin with the raw amino-acid sequence, 376 residues long: General transcription factor IIH subunit 2 (376 aa).

The VWFA domain occupies 64–206 (HVMIVIDCSR…NIRCSAIGLS (143 aa)). A C4-type zinc finger spans residues 286–303 (CTQCGARHCSIPAECPVC).

This sequence belongs to the GTF2H2 family. In terms of assembly, component of the 7-subunit TFIIH core complex composed of xpb-1, xpd-1, gtf-2H1, gtf-2H2C, gtf-2H3, Y73F8A.24 and gtf-2H5, which is active in NER. The core complex associates with the 3-subunit CDK-activating kinase (CAK) module composed of cyh-1, cdk-7 and mnat-1 to form the 10-subunit holoenzyme (holo-TFIIH) active in transcription.

It localises to the nucleus. Functionally, component of the general transcription and DNA repair factor IIH (TFIIH) core complex, which is involved in general and transcription-coupled nucleotide excision repair (NER) of damaged DNA and, when complexed to CAK, in RNA transcription by RNA polymerase II. In NER, TFIIH acts by opening DNA around the lesion to allow the excision of the damaged oligonucleotide and its replacement by a new DNA fragment. In transcription, TFIIH has an essential role in transcription initiation. When the pre-initiation complex (PIC) has been established, TFIIH is required for promoter opening and promoter escape. Phosphorylation of the C-terminal tail (CTD) of the largest subunit of RNA polymerase II by the kinase module CAK controls the initiation of transcription. The polypeptide is General transcription factor IIH subunit 2 (Caenorhabditis elegans).